A 315-amino-acid polypeptide reads, in one-letter code: Ribose-phosphate pyrophosphokinase (315 aa).

ATP contacts are provided by residues 37-39 (DGE) and 96-97 (RQ). The Mg(2+) site is built by H131 and D170. The active site involves K194. Residues R196, D220, and 224–228 (DTGGT) contribute to the D-ribose 5-phosphate site.

This sequence belongs to the ribose-phosphate pyrophosphokinase family. Class I subfamily. In terms of assembly, homohexamer. Mg(2+) is required as a cofactor.

It localises to the cytoplasm. The catalysed reaction is D-ribose 5-phosphate + ATP = 5-phospho-alpha-D-ribose 1-diphosphate + AMP + H(+). It participates in metabolic intermediate biosynthesis; 5-phospho-alpha-D-ribose 1-diphosphate biosynthesis; 5-phospho-alpha-D-ribose 1-diphosphate from D-ribose 5-phosphate (route I): step 1/1. Involved in the biosynthesis of the central metabolite phospho-alpha-D-ribosyl-1-pyrophosphate (PRPP) via the transfer of pyrophosphoryl group from ATP to 1-hydroxyl of ribose-5-phosphate (Rib-5-P). This Salmonella typhi protein is Ribose-phosphate pyrophosphokinase.